The primary structure comprises 72 residues: Translation initiation factor IF-1 (72 aa).

Residues 1-72 (MPKDDSIEVE…TRGRITYRAK (72 aa)) form the S1-like domain.

Belongs to the IF-1 family. As to quaternary structure, component of the 30S ribosomal translation pre-initiation complex which assembles on the 30S ribosome in the order IF-2 and IF-3, IF-1 and N-formylmethionyl-tRNA(fMet); mRNA recruitment can occur at any time during PIC assembly.

The protein localises to the cytoplasm. Its function is as follows. One of the essential components for the initiation of protein synthesis. Stabilizes the binding of IF-2 and IF-3 on the 30S subunit to which N-formylmethionyl-tRNA(fMet) subsequently binds. Helps modulate mRNA selection, yielding the 30S pre-initiation complex (PIC). Upon addition of the 50S ribosomal subunit IF-1, IF-2 and IF-3 are released leaving the mature 70S translation initiation complex. The chain is Translation initiation factor IF-1 from Myxococcus xanthus (strain DK1622).